A 166-amino-acid chain; its full sequence is NAD(P)H-quinone oxidoreductase subunit I, chloroplastic (166 aa).

4Fe-4S ferredoxin-type domains are found at residues 55–84 (GRIH…VDWK) and 95–124 (LNYS…MTEE). Residues Cys64, Cys67, Cys70, Cys74, Cys104, Cys107, Cys110, and Cys114 each coordinate [4Fe-4S] cluster.

This sequence belongs to the complex I 23 kDa subunit family. As to quaternary structure, NDH is composed of at least 16 different subunits, 5 of which are encoded in the nucleus. It depends on [4Fe-4S] cluster as a cofactor.

The protein localises to the plastid. Its subcellular location is the chloroplast thylakoid membrane. The catalysed reaction is a plastoquinone + NADH + (n+1) H(+)(in) = a plastoquinol + NAD(+) + n H(+)(out). It catalyses the reaction a plastoquinone + NADPH + (n+1) H(+)(in) = a plastoquinol + NADP(+) + n H(+)(out). Functionally, NDH shuttles electrons from NAD(P)H:plastoquinone, via FMN and iron-sulfur (Fe-S) centers, to quinones in the photosynthetic chain and possibly in a chloroplast respiratory chain. The immediate electron acceptor for the enzyme in this species is believed to be plastoquinone. Couples the redox reaction to proton translocation, and thus conserves the redox energy in a proton gradient. This chain is NAD(P)H-quinone oxidoreductase subunit I, chloroplastic, found in Picradeniopsis absinthifolia (Hairyseed bahia).